A 478-amino-acid polypeptide reads, in one-letter code: Protein nucleotidyltransferase YdiU (478 aa).

Residues glycine 84, glycine 86, arginine 87, lysine 107, aspartate 119, glycine 120, arginine 170, and arginine 177 each contribute to the ATP site. Aspartate 246 serves as the catalytic Proton acceptor. Asparagine 247 and aspartate 256 together coordinate Mg(2+). Aspartate 256 is a binding site for ATP.

The protein belongs to the SELO family. Requires Mg(2+) as cofactor. Mn(2+) serves as cofactor.

It carries out the reaction L-seryl-[protein] + ATP = 3-O-(5'-adenylyl)-L-seryl-[protein] + diphosphate. The enzyme catalyses L-threonyl-[protein] + ATP = 3-O-(5'-adenylyl)-L-threonyl-[protein] + diphosphate. The catalysed reaction is L-tyrosyl-[protein] + ATP = O-(5'-adenylyl)-L-tyrosyl-[protein] + diphosphate. It catalyses the reaction L-histidyl-[protein] + UTP = N(tele)-(5'-uridylyl)-L-histidyl-[protein] + diphosphate. It carries out the reaction L-seryl-[protein] + UTP = O-(5'-uridylyl)-L-seryl-[protein] + diphosphate. The enzyme catalyses L-tyrosyl-[protein] + UTP = O-(5'-uridylyl)-L-tyrosyl-[protein] + diphosphate. Nucleotidyltransferase involved in the post-translational modification of proteins. It can catalyze the addition of adenosine monophosphate (AMP) or uridine monophosphate (UMP) to a protein, resulting in modifications known as AMPylation and UMPylation. The protein is Protein nucleotidyltransferase YdiU of Escherichia coli O81 (strain ED1a).